The chain runs to 427 residues: Enolase (427 aa).

Gln163 contacts (2R)-2-phosphoglycerate. The active-site Proton donor is the Glu205. Asp242, Glu285, and Asp312 together coordinate Mg(2+). (2R)-2-phosphoglycerate is bound by residues Lys337, Arg366, Ser367, and Lys388. Lys337 serves as the catalytic Proton acceptor.

It belongs to the enolase family. Requires Mg(2+) as cofactor.

The protein localises to the cytoplasm. The protein resides in the secreted. Its subcellular location is the cell surface. It carries out the reaction (2R)-2-phosphoglycerate = phosphoenolpyruvate + H2O. It functions in the pathway carbohydrate degradation; glycolysis; pyruvate from D-glyceraldehyde 3-phosphate: step 4/5. Functionally, catalyzes the reversible conversion of 2-phosphoglycerate (2-PG) into phosphoenolpyruvate (PEP). It is essential for the degradation of carbohydrates via glycolysis. The polypeptide is Enolase (Rhodopseudomonas palustris (strain HaA2)).